The chain runs to 365 residues: 3-isopropylmalate dehydrogenase (365 aa).

78–91 (GPKWDTLPAEERPE) contacts NAD(+). Residues arginine 99, arginine 109, arginine 138, and aspartate 227 each contribute to the substrate site. Mg(2+) contacts are provided by aspartate 227, aspartate 251, and aspartate 255. Residue 285–297 (GSAPDIAGKNIAN) coordinates NAD(+).

This sequence belongs to the isocitrate and isopropylmalate dehydrogenases family. LeuB type 1 subfamily. In terms of assembly, homodimer. Mg(2+) serves as cofactor. The cofactor is Mn(2+).

The protein localises to the cytoplasm. The enzyme catalyses (2R,3S)-3-isopropylmalate + NAD(+) = 4-methyl-2-oxopentanoate + CO2 + NADH. Its pathway is amino-acid biosynthesis; L-leucine biosynthesis; L-leucine from 3-methyl-2-oxobutanoate: step 3/4. Catalyzes the oxidation of 3-carboxy-2-hydroxy-4-methylpentanoate (3-isopropylmalate) to 3-carboxy-4-methyl-2-oxopentanoate. The product decarboxylates to 4-methyl-2 oxopentanoate. This chain is 3-isopropylmalate dehydrogenase, found in Syntrophotalea carbinolica (strain DSM 2380 / NBRC 103641 / GraBd1) (Pelobacter carbinolicus).